Consider the following 364-residue polypeptide: N-acetyl-gamma-glutamyl-phosphate reductase (364 aa).

Residue cysteine 157 is part of the active site.

Belongs to the NAGSA dehydrogenase family. Type 1 subfamily.

It localises to the cytoplasm. The enzyme catalyses N-acetyl-L-glutamate 5-semialdehyde + phosphate + NADP(+) = N-acetyl-L-glutamyl 5-phosphate + NADPH + H(+). It functions in the pathway amino-acid biosynthesis; L-arginine biosynthesis; N(2)-acetyl-L-ornithine from L-glutamate: step 3/4. Catalyzes the NADPH-dependent reduction of N-acetyl-5-glutamyl phosphate to yield N-acetyl-L-glutamate 5-semialdehyde. This is N-acetyl-gamma-glutamyl-phosphate reductase from Bifidobacterium animalis subsp. lactis (strain AD011).